A 145-amino-acid polypeptide reads, in one-letter code: MRALIQRVTEASVRVEGAVIGRTGPGLLVLVCGMPGDTDRSVAALAGKIAKLRIFRDAEGRMNRSLLDVGGGALVVSQFTLAADTSRGNRPGFSAAAPPKEGERLYEAFAAALAETGVAVETGRFGANMAVALVNDGPVTIWMEG.

The Gly-cisPro motif, important for rejection of L-amino acids motif lies at 137–138 (GP).

The protein belongs to the DTD family. Homodimer.

The protein resides in the cytoplasm. The catalysed reaction is glycyl-tRNA(Ala) + H2O = tRNA(Ala) + glycine + H(+). It catalyses the reaction a D-aminoacyl-tRNA + H2O = a tRNA + a D-alpha-amino acid + H(+). Functionally, an aminoacyl-tRNA editing enzyme that deacylates mischarged D-aminoacyl-tRNAs. Also deacylates mischarged glycyl-tRNA(Ala), protecting cells against glycine mischarging by AlaRS. Acts via tRNA-based rather than protein-based catalysis; rejects L-amino acids rather than detecting D-amino acids in the active site. By recycling D-aminoacyl-tRNA to D-amino acids and free tRNA molecules, this enzyme counteracts the toxicity associated with the formation of D-aminoacyl-tRNA entities in vivo and helps enforce protein L-homochirality. The protein is D-aminoacyl-tRNA deacylase of Dinoroseobacter shibae (strain DSM 16493 / NCIMB 14021 / DFL 12).